A 349-amino-acid polypeptide reads, in one-letter code: Fe(3+) ions import ATP-binding protein FbpC (349 aa).

The ABC transporter domain occupies 4 to 236 (LELHHIGKSY…PVDEPTATFL (233 aa)). 36–43 (GPSGSGKT) serves as a coordination point for ATP.

Belongs to the ABC transporter superfamily. Fe(3+) ion importer (TC 3.A.1.10) family. In terms of assembly, the complex is composed of two ATP-binding proteins (FbpC), two transmembrane proteins (FbpB) and a solute-binding protein (FbpA).

Its subcellular location is the cell inner membrane. It carries out the reaction Fe(3+)(out) + ATP + H2O = Fe(3+)(in) + ADP + phosphate + H(+). Part of the ABC transporter complex FbpABC involved in Fe(3+) ions import. Responsible for energy coupling to the transport system. This chain is Fe(3+) ions import ATP-binding protein FbpC, found in Yersinia pestis bv. Antiqua (strain Antiqua).